We begin with the raw amino-acid sequence, 144 residues long: Snake venom vascular endothelial growth factor toxin VR-1 (144 aa).

A signal peptide spans methionine 1 to glycine 24. Glutamine 25 is modified (pyrrolidone carboxylic acid). Disulfide bonds link cysteine 38–cysteine 80, cysteine 69–cysteine 115, and cysteine 73–cysteine 117. Residues arginine 120 to arginine 134 are compositionally biased toward basic and acidic residues. The interval arginine 120–aspartate 144 is disordered. The propeptide occupies arginine 134–aspartate 144.

It belongs to the PDGF/VEGF growth factor family. Snake venom VEGF subfamily. As to quaternary structure, homodimer; disulfide-linked. Interacts with VEGF receptor-2 (KDR) with high affinity, but not with VEGF receptor-1 (Flt-1), VEGF receptor-3 (FLT4), and neuropilin-1 (NRP1). Expressed by the venom gland.

It localises to the secreted. In terms of biological role, snake venom VEGFs may contribute to venom dispersion and prey subjugation by inducing vascular permeability and hypotension. This protein induces angiogenesis probably through VEGF receptor (KDR/VEGFR-2) signaling, as well as drastic hypotension. The hypotension is mediated by nitric oxide, which is produced by VEGF-activated endothelium NO synthase. May also induce vascular permeability. The polypeptide is Snake venom vascular endothelial growth factor toxin VR-1 (Daboia russelii (Russel's viper)).